A 167-amino-acid chain; its full sequence is Peptide deformylase (167 aa).

Residues Cys91 and His133 each coordinate Fe cation. Glu134 is an active-site residue. His137 is a Fe cation binding site.

It belongs to the polypeptide deformylase family. Requires Fe(2+) as cofactor.

It carries out the reaction N-terminal N-formyl-L-methionyl-[peptide] + H2O = N-terminal L-methionyl-[peptide] + formate. Removes the formyl group from the N-terminal Met of newly synthesized proteins. Requires at least a dipeptide for an efficient rate of reaction. N-terminal L-methionine is a prerequisite for activity but the enzyme has broad specificity at other positions. In Neisseria meningitidis serogroup C (strain 053442), this protein is Peptide deformylase.